Consider the following 1044-residue polypeptide: Unconventional myosin-Ic (1044 aa).

One can recognise a Myosin motor domain in the interval 28-712; sequence GVQDFVLLEN…TLFATEDSLE (685 aa). ATP is bound by residues Asn69, Tyr77, 120 to 129, and 173 to 177; these read SGESGAGKTE and NDNSS. An N6-methyllysine modification is found at Lys364. At Ser389 the chain carries Phosphoserine. Position 467 is an N6-acetyllysine (Lys467). Position 517 is a phosphoserine (Ser517). The interval 589-611 is actin-binding; sequence LLQLVEILRSKEPAYIRCIKPND. 2 consecutive IQ domains span residues 715-744 and 738-767; these read RQSL…SAIC and VKRS…AAQT. A phosphoserine mark is found at Ser845 and Ser1022. In terms of domain architecture, TH1 spans 866-1040; sequence KDNYPQSVPR…NGHLAVVAPR (175 aa).

It belongs to the TRAFAC class myosin-kinesin ATPase superfamily. Myosin family. As to quaternary structure, interacts (via its IQ motifs) with CABP1 and CIB1; the interaction with CABP1 and CIB1 is calcium-dependent. Interacts (via tail domain) with PLEKHB1 (via PH domain); the interaction is not affected by the presence or absence of calcium and CALM. Interacts with POLR1A. Interacts with POLR2A. Component of the B-WICH complex, at least composed of SMARCA5/SNF2H, BAZ1B/WSTF, SF3B1, DEK, MYO1C, ERCC6, MYBBP1A and DDX21. Interacts (via its IQ motifs) with CALM; this precludes interaction with YWHAB. Interacts with YWHAB; this precludes interaction with CALM. Interacts with RPS6. Interacts with actin. Interacts with LLPH. Interacts with GLUT4. Interacts (via its IQ motifs) with SH3BGRL3; the interaction is dependent on calcium and takes place at membrane ruffles.

The protein resides in the cytoplasm. It is found in the nucleus. It localises to the cell cortex. Its subcellular location is the cell projection. The protein localises to the stereocilium membrane. The protein resides in the cytoplasmic vesicle. It is found in the ruffle membrane. Functionally, myosins are actin-based motor molecules with ATPase activity. Unconventional myosins serve in intracellular movements. Their highly divergent tails are presumed to bind to membranous compartments, which would be moved relative to actin filaments. Involved in glucose transporter recycling in response to insulin by regulating movement of intracellular GLUT4-containing vesicles to the plasma membrane. Component of the hair cell's (the sensory cells of the inner ear) adaptation-motor complex. Acts as a mediator of adaptation of mechanoelectrical transduction in stereocilia of vestibular hair cells. Binds phosphoinositides and links the actin cytoskeleton to cellular membranes. This is Unconventional myosin-Ic (Myo1c) from Rattus norvegicus (Rat).